A 134-amino-acid chain; its full sequence is Large ribosomal subunit protein bL20 (134 aa).

Belongs to the bacterial ribosomal protein bL20 family.

Functionally, binds directly to 23S ribosomal RNA and is necessary for the in vitro assembly process of the 50S ribosomal subunit. It is not involved in the protein synthesizing functions of that subunit. The protein is Large ribosomal subunit protein bL20 of Rhizobium etli (strain ATCC 51251 / DSM 11541 / JCM 21823 / NBRC 15573 / CFN 42).